Consider the following 360-residue polypeptide: Peptide chain release factor 1 (360 aa).

Residue Q235 is modified to N5-methylglutamine.

The protein belongs to the prokaryotic/mitochondrial release factor family. Methylated by PrmC. Methylation increases the termination efficiency of RF1.

Its subcellular location is the cytoplasm. Its function is as follows. Peptide chain release factor 1 directs the termination of translation in response to the peptide chain termination codons UAG and UAA. This is Peptide chain release factor 1 from Burkholderia pseudomallei (strain 1106a).